Reading from the N-terminus, the 459-residue chain is Pup--protein ligase (459 aa).

E9 serves as a coordination point for Mg(2+). Position 54 (R54) interacts with ATP. Residue Y56 participates in Mg(2+) binding. Catalysis depends on D58, which acts as the Proton acceptor. Mg(2+) is bound at residue E64. Residues T67 and W421 each contribute to the ATP site.

This sequence belongs to the Pup ligase/Pup deamidase family. Pup-conjugating enzyme subfamily.

It carries out the reaction ATP + [prokaryotic ubiquitin-like protein]-L-glutamate + [protein]-L-lysine = ADP + phosphate + N(6)-([prokaryotic ubiquitin-like protein]-gamma-L-glutamyl)-[protein]-L-lysine.. Its pathway is protein degradation; proteasomal Pup-dependent pathway. The protein operates within protein modification; protein pupylation. Catalyzes the covalent attachment of the prokaryotic ubiquitin-like protein modifier Pup to the proteasomal substrate proteins, thereby targeting them for proteasomal degradation. This tagging system is termed pupylation. The ligation reaction involves the side-chain carboxylate of the C-terminal glutamate of Pup and the side-chain amino group of a substrate lysine. The sequence is that of Pup--protein ligase from Jonesia denitrificans (strain ATCC 14870 / DSM 20603 / BCRC 15368 / CIP 55.134 / JCM 11481 / NBRC 15587 / NCTC 10816 / Prevot 55134) (Listeria denitrificans).